Here is a 169-residue protein sequence, read N- to C-terminus: 2-C-methyl-D-erythritol 2,4-cyclodiphosphate synthase (169 aa).

Residues Asp13 and His15 each coordinate a divalent metal cation. 4-CDP-2-C-methyl-D-erythritol 2-phosphate contacts are provided by residues 13 to 15 (DVH) and 39 to 40 (HS). Position 47 (His47) interacts with a divalent metal cation. 4-CDP-2-C-methyl-D-erythritol 2-phosphate is bound by residues 61–63 (DIG), 66–70 (FPDTD), Phe144, and Arg147.

It belongs to the IspF family. As to quaternary structure, homotrimer. It depends on a divalent metal cation as a cofactor.

It carries out the reaction 4-CDP-2-C-methyl-D-erythritol 2-phosphate = 2-C-methyl-D-erythritol 2,4-cyclic diphosphate + CMP. The protein operates within isoprenoid biosynthesis; isopentenyl diphosphate biosynthesis via DXP pathway; isopentenyl diphosphate from 1-deoxy-D-xylulose 5-phosphate: step 4/6. Involved in the biosynthesis of isopentenyl diphosphate (IPP) and dimethylallyl diphosphate (DMAPP), two major building blocks of isoprenoid compounds. Catalyzes the conversion of 4-diphosphocytidyl-2-C-methyl-D-erythritol 2-phosphate (CDP-ME2P) to 2-C-methyl-D-erythritol 2,4-cyclodiphosphate (ME-CPP) with a corresponding release of cytidine 5-monophosphate (CMP). The sequence is that of 2-C-methyl-D-erythritol 2,4-cyclodiphosphate synthase from Cupriavidus necator (strain ATCC 17699 / DSM 428 / KCTC 22496 / NCIMB 10442 / H16 / Stanier 337) (Ralstonia eutropha).